A 263-amino-acid chain; its full sequence is Chaperone protein ClpE (263 aa).

Positions 1–34 (MSKRNAVTTFFTNRVTKALGMTLALMMTCQSAMA) are cleaved as a signal peptide. Over residues 238-255 (QKKTPTSSGQKASDSLVN) the composition is skewed to polar residues. The tract at residues 238-263 (QKKTPTSSGQKASDSLVNPSDKADKK) is disordered.

It belongs to the periplasmic pilus chaperone family.

Its subcellular location is the periplasm. Involved in the biogenesis of the CS31A capsule-like antigen. In Escherichia coli, this protein is Chaperone protein ClpE (clpE).